A 59-amino-acid chain; its full sequence is Insertion element IS986 uncharacterized 6.6 kDa protein (59 aa).

The interval 1–26 is disordered; that stretch reads MRKWVRQAQVDAGARPGTTTEESAEI.

This sequence belongs to the transposase 8 family.

The polypeptide is Insertion element IS986 uncharacterized 6.6 kDa protein (Mycobacterium tuberculosis).